The chain runs to 470 residues: Maturase K (470 aa).

The protein belongs to the intron maturase 2 family. MatK subfamily.

It is found in the plastid. The protein localises to the chloroplast. In terms of biological role, usually encoded in the trnK tRNA gene intron. Probably assists in splicing its own and other chloroplast group II introns. The chain is Maturase K from Nypa fruticans (Nypa palm).